The primary structure comprises 906 residues: UPF0182 protein CA_C0010 (906 aa).

7 helical membrane passes run 7-29 (IVTI…DFII), 47-69 (LAAI…WFYY), 96-118 (VAIV…VYWY), 153-175 (LYGV…YIVL), 208-230 (FAII…SFNL), 250-272 (LVFY…TSII), and 279-301 (IFVS…EIVQ). Residues 842–862 (NSSNNQSETRTETGGTSTDSS) are compositionally biased toward low complexity. Positions 842 to 875 (NSSNNQSETRTETGGTSTDSSNNKDKLKQAQDLY) are disordered.

Belongs to the UPF0182 family.

It is found in the cell membrane. This chain is UPF0182 protein CA_C0010, found in Clostridium acetobutylicum (strain ATCC 824 / DSM 792 / JCM 1419 / IAM 19013 / LMG 5710 / NBRC 13948 / NRRL B-527 / VKM B-1787 / 2291 / W).